The following is a 188-amino-acid chain: Elongation factor P (188 aa).

It belongs to the elongation factor P family.

The protein resides in the cytoplasm. It functions in the pathway protein biosynthesis; polypeptide chain elongation. Functionally, involved in peptide bond synthesis. Stimulates efficient translation and peptide-bond synthesis on native or reconstituted 70S ribosomes in vitro. Probably functions indirectly by altering the affinity of the ribosome for aminoacyl-tRNA, thus increasing their reactivity as acceptors for peptidyl transferase. The chain is Elongation factor P from Bacteroides thetaiotaomicron (strain ATCC 29148 / DSM 2079 / JCM 5827 / CCUG 10774 / NCTC 10582 / VPI-5482 / E50).